We begin with the raw amino-acid sequence, 341 residues long: Methionine import ATP-binding protein MetN 2 (341 aa).

An ABC transporter domain is found at 2-241 (ILLENVKKIY…PQQDITKRFV (240 aa)). 38 to 45 (GYSGAGKS) is a binding site for ATP.

This sequence belongs to the ABC transporter superfamily. Methionine importer (TC 3.A.1.24) family. The complex is composed of two ATP-binding proteins (MetN), two transmembrane proteins (MetI) and a solute-binding protein (MetQ).

It localises to the cell membrane. The enzyme catalyses L-methionine(out) + ATP + H2O = L-methionine(in) + ADP + phosphate + H(+). The catalysed reaction is D-methionine(out) + ATP + H2O = D-methionine(in) + ADP + phosphate + H(+). In terms of biological role, part of the ABC transporter complex MetNIQ involved in methionine import. Responsible for energy coupling to the transport system. The sequence is that of Methionine import ATP-binding protein MetN 2 from Bacillus thuringiensis subsp. konkukian (strain 97-27).